The chain runs to 301 residues: Methionyl-tRNA formyltransferase (301 aa).

109 to 112 (SLLP) is a binding site for (6S)-5,6,7,8-tetrahydrofolate.

It belongs to the Fmt family.

The catalysed reaction is L-methionyl-tRNA(fMet) + (6R)-10-formyltetrahydrofolate = N-formyl-L-methionyl-tRNA(fMet) + (6S)-5,6,7,8-tetrahydrofolate + H(+). In terms of biological role, attaches a formyl group to the free amino group of methionyl-tRNA(fMet). The formyl group appears to play a dual role in the initiator identity of N-formylmethionyl-tRNA by promoting its recognition by IF2 and preventing the misappropriation of this tRNA by the elongation apparatus. This chain is Methionyl-tRNA formyltransferase, found in Jannaschia sp. (strain CCS1).